Reading from the N-terminus, the 308-residue chain is Pyrroline-5-carboxylate reductase 3 (308 aa).

This sequence belongs to the pyrroline-5-carboxylate reductase family. Homodecamer; composed of 5 homodimers.

It is found in the cytoplasm. The catalysed reaction is L-proline + NADP(+) = (S)-1-pyrroline-5-carboxylate + NADPH + 2 H(+). The enzyme catalyses L-proline + NAD(+) = (S)-1-pyrroline-5-carboxylate + NADH + 2 H(+). It functions in the pathway amino-acid biosynthesis; L-proline biosynthesis; L-proline from L-glutamate 5-semialdehyde: step 1/1. Oxidoreductase that catalyzes the last step in proline biosynthesis, which corresponds to the reduction of pyrroline-5-carboxylate (P5C) to L-proline using NAD(P)H. Proline is synthesized from either glutamate or ornithine; both are converted to P5C, and then to proline via pyrroline-5-carboxylate reductases (PYCRs). PYCR3 is exclusively linked to the biosynthesis of proline from ornithine. The protein is Pyrroline-5-carboxylate reductase 3 of Bos taurus (Bovine).